A 93-amino-acid polypeptide reads, in one-letter code: Large ribosomal subunit protein uL23 (93 aa).

The protein belongs to the universal ribosomal protein uL23 family. Part of the 50S ribosomal subunit. Contacts protein L29, and trigger factor when it is bound to the ribosome.

One of the early assembly proteins it binds 23S rRNA. One of the proteins that surrounds the polypeptide exit tunnel on the outside of the ribosome. Forms the main docking site for trigger factor binding to the ribosome. This is Large ribosomal subunit protein uL23 from Nautilia profundicola (strain ATCC BAA-1463 / DSM 18972 / AmH).